A 40-amino-acid polypeptide reads, in one-letter code: RapK inhibitor (40 aa).

2 consecutive propeptides follow at residues 1-34 and Gly-40; that span reads MKKL…IQVA.

It belongs to the Phr family. Post-translationally, contains a predicted signal peptide cleavage site in the N-terminal region, however the propeptide is probably only subject to processing events at the ends of the mature peptide.

It is found in the secreted. The protein localises to the cytoplasm. In terms of biological role, signaling molecule involved in the regulation of genetic competence development. Secreted during production, but the mature peptide acts intracellularly, indicating that it needs to be imported into the cell to function. Stimulates expression of the genes controlled by ComA, a transcriptional factor that regulates the development of genetic competence. Acts by inhibiting RapK, which regulates the activity of ComA. This Bacillus subtilis (strain 168) protein is RapK inhibitor (phrK).